The sequence spans 506 residues: Pleckstrin homology domain-containing family D member 1 (506 aa).

The 109-residue stretch at 28 to 136 folds into the PH domain; it reads KVQLYGVLWK…WLEMLQESGK (109 aa). The stretch at 146–391 forms a coiled coil; it reads EAMIKSLEAQ…KVRNKEKEER (246 aa). At R503 the chain carries Omega-N-methylarginine.

Belongs to the PLEKHD1 family.

This is Pleckstrin homology domain-containing family D member 1 (PLEKHD1) from Homo sapiens (Human).